Consider the following 151-residue polypeptide: Deoxyuridine 5'-triphosphate nucleotidohydrolase (151 aa).

Residues 70 to 72, Asn83, 87 to 89, and Met97 each bind substrate; these read RSG and LID.

It belongs to the dUTPase family. Mg(2+) serves as cofactor.

It catalyses the reaction dUTP + H2O = dUMP + diphosphate + H(+). The protein operates within pyrimidine metabolism; dUMP biosynthesis; dUMP from dCTP (dUTP route): step 2/2. Its function is as follows. This enzyme is involved in nucleotide metabolism: it produces dUMP, the immediate precursor of thymidine nucleotides and it decreases the intracellular concentration of dUTP so that uracil cannot be incorporated into DNA. The protein is Deoxyuridine 5'-triphosphate nucleotidohydrolase of Pseudomonas paraeruginosa (strain DSM 24068 / PA7) (Pseudomonas aeruginosa (strain PA7)).